We begin with the raw amino-acid sequence, 527 residues long: Glucose-6-phosphate isomerase (527 aa).

The Proton donor role is filled by glutamate 347. Residues histidine 378 and lysine 493 contribute to the active site.

It belongs to the GPI family.

The protein localises to the cytoplasm. The enzyme catalyses alpha-D-glucose 6-phosphate = beta-D-fructose 6-phosphate. The protein operates within carbohydrate biosynthesis; gluconeogenesis. It functions in the pathway carbohydrate degradation; glycolysis; D-glyceraldehyde 3-phosphate and glycerone phosphate from D-glucose: step 2/4. Functionally, catalyzes the reversible isomerization of glucose-6-phosphate to fructose-6-phosphate. The chain is Glucose-6-phosphate isomerase from Chlamydia caviae (strain ATCC VR-813 / DSM 19441 / 03DC25 / GPIC) (Chlamydophila caviae).